The chain runs to 197 residues: ATP-dependent Clp protease proteolytic subunit (197 aa).

Catalysis depends on Ser-98, which acts as the Nucleophile. Residue His-123 is part of the active site.

Belongs to the peptidase S14 family. In terms of assembly, fourteen ClpP subunits assemble into 2 heptameric rings which stack back to back to give a disk-like structure with a central cavity, resembling the structure of eukaryotic proteasomes.

It localises to the cytoplasm. The catalysed reaction is Hydrolysis of proteins to small peptides in the presence of ATP and magnesium. alpha-casein is the usual test substrate. In the absence of ATP, only oligopeptides shorter than five residues are hydrolyzed (such as succinyl-Leu-Tyr-|-NHMec, and Leu-Tyr-Leu-|-Tyr-Trp, in which cleavage of the -Tyr-|-Leu- and -Tyr-|-Trp bonds also occurs).. Its function is as follows. Cleaves peptides in various proteins in a process that requires ATP hydrolysis. Has a chymotrypsin-like activity. Plays a major role in the degradation of misfolded proteins. This chain is ATP-dependent Clp protease proteolytic subunit, found in Ligilactobacillus salivarius (strain UCC118) (Lactobacillus salivarius).